We begin with the raw amino-acid sequence, 265 residues long: Mlc titration factor A (265 aa).

Zn(2+) is bound by residues His111, His148, His152, and Glu211.

It belongs to the MtfA family. Interacts with Mlc. Zn(2+) is required as a cofactor.

It localises to the cytoplasm. Its function is as follows. Involved in the modulation of the activity of the glucose-phosphotransferase system (glucose-PTS). Interacts with the transcriptional repressor Mlc, preventing its interaction with DNA and leading to the modulation of expression of genes regulated by Mlc, including ptsG, which encodes the PTS system glucose-specific EIICB component. Functionally, shows zinc-dependent metallopeptidase activity. In Escherichia fergusonii, this protein is Mlc titration factor A.